We begin with the raw amino-acid sequence, 549 residues long: Chaperonin GroEL (549 aa).

ATP is bound by residues 30 to 33 (TLGP), lysine 51, 87 to 91 (DGTTT), glycine 415, 479 to 481 (NAA), and aspartate 495.

The protein belongs to the chaperonin (HSP60) family. Forms a cylinder of 14 subunits composed of two heptameric rings stacked back-to-back. Interacts with the co-chaperonin GroES.

The protein localises to the cytoplasm. It carries out the reaction ATP + H2O + a folded polypeptide = ADP + phosphate + an unfolded polypeptide.. Functionally, together with its co-chaperonin GroES, plays an essential role in assisting protein folding. The GroEL-GroES system forms a nano-cage that allows encapsulation of the non-native substrate proteins and provides a physical environment optimized to promote and accelerate protein folding. This is Chaperonin GroEL from Stenotrophomonas maltophilia (strain K279a).